A 177-amino-acid polypeptide reads, in one-letter code: Endoribonuclease YbeY (177 aa).

Zn(2+) contacts are provided by His118, His122, and His128.

The protein belongs to the endoribonuclease YbeY family. Zn(2+) is required as a cofactor.

Its subcellular location is the cytoplasm. In terms of biological role, single strand-specific metallo-endoribonuclease involved in late-stage 70S ribosome quality control and in maturation of the 3' terminus of the 16S rRNA. In Mycobacterium bovis (strain ATCC BAA-935 / AF2122/97), this protein is Endoribonuclease YbeY.